A 469-amino-acid polypeptide reads, in one-letter code: Argininosuccinate lyase (469 aa).

It belongs to the lyase 1 family. Argininosuccinate lyase subfamily.

It localises to the cytoplasm. It catalyses the reaction 2-(N(omega)-L-arginino)succinate = fumarate + L-arginine. It functions in the pathway amino-acid biosynthesis; L-arginine biosynthesis; L-arginine from L-ornithine and carbamoyl phosphate: step 3/3. This is Argininosuccinate lyase from Saccharophagus degradans (strain 2-40 / ATCC 43961 / DSM 17024).